A 470-amino-acid polypeptide reads, in one-letter code: MKKTKIVCTIGPKTESEEMLAKMLDAGMNVMRLNFSHGDYAEHGQRIQNLRNVMSKTGKTAAILLDTKGPEIRTMKLEGGNDVSLKAGQTFTFTTDKSVIGNSEMVAVTYEGFTTDLSVGNTVLVDDGLIGMEVTAIEGNKVICKVLNNGDLGENKGVNLPGVSIALPALAEKDKQDLIFGCEQGVDFVAASFIRKRSDVIEIREHLKAHGGENIHIISKIENQEGLNNFDEILEASDGIMVARGDLGVEIPVEEVIFAQKMMIEKCIRARKVVITATQMLDSMIKNPRPTRAEAGDVANAILDGTDAVMLSGESAKGKYPLEAVSIMATICERTDRVMNSRLEFNNDNRKLRITEAVCRGAVETAEKLDAPLIVVATQGGKSARAVRKYFPDATILALTTNEKTAHQLVLSKGVVPQLVKEITSTDDFYRLGKELALQSGLAHKGDVVVMVSGALVPSGTTNTASVHVL.

Arg32 provides a ligand contact to substrate. Residues Asn34, Ser36, Asp66, and Thr67 each contribute to the K(+) site. 34-37 serves as a coordination point for ATP; sequence NFSH. Arg73 contacts ATP. At Lys76 the chain carries N6-acetyllysine. Lys156 is an ATP binding site. Position 222 (Glu222) interacts with Mg(2+). Gly245, Asp246, and Thr278 together coordinate substrate. Residue Asp246 coordinates Mg(2+). At Lys319 the chain carries N6-acetyllysine.

This sequence belongs to the pyruvate kinase family. As to quaternary structure, homotetramer. Mg(2+) serves as cofactor. K(+) is required as a cofactor.

The enzyme catalyses pyruvate + ATP = phosphoenolpyruvate + ADP + H(+). It functions in the pathway carbohydrate degradation; glycolysis; pyruvate from D-glyceraldehyde 3-phosphate: step 5/5. This Escherichia coli O157:H7 protein is Pyruvate kinase I (pykF).